We begin with the raw amino-acid sequence, 450 residues long: tRNA-2-methylthio-N(6)-dimethylallyladenosine synthase (450 aa).

Residues 14–132 (GEFFIETWGC…FPNYLNEVKK (119 aa)) form the MTTase N-terminal domain. [4Fe-4S] cluster is bound by residues cysteine 23, cysteine 59, cysteine 93, cysteine 169, cysteine 173, and cysteine 176. In terms of domain architecture, Radical SAM core spans 155 to 385 (RKNSMKAFVT…VEVVNEISAK (231 aa)). Residues 388–450 (KAYEGKIEEV…NSFSLTGEEI (63 aa)) form the TRAM domain.

Belongs to the methylthiotransferase family. MiaB subfamily. As to quaternary structure, monomer. [4Fe-4S] cluster is required as a cofactor.

It is found in the cytoplasm. It carries out the reaction N(6)-dimethylallyladenosine(37) in tRNA + (sulfur carrier)-SH + AH2 + 2 S-adenosyl-L-methionine = 2-methylsulfanyl-N(6)-dimethylallyladenosine(37) in tRNA + (sulfur carrier)-H + 5'-deoxyadenosine + L-methionine + A + S-adenosyl-L-homocysteine + 2 H(+). Its function is as follows. Catalyzes the methylthiolation of N6-(dimethylallyl)adenosine (i(6)A), leading to the formation of 2-methylthio-N6-(dimethylallyl)adenosine (ms(2)i(6)A) at position 37 in tRNAs that read codons beginning with uridine. This chain is tRNA-2-methylthio-N(6)-dimethylallyladenosine synthase, found in Clostridium botulinum (strain Langeland / NCTC 10281 / Type F).